Reading from the N-terminus, the 318-residue chain is NADH-ubiquinone oxidoreductase chain 1 (318 aa).

A run of 8 helical transmembrane segments spans residues Pro-2 to Leu-22, Ile-68 to Pro-88, Leu-100 to Gly-120, Leu-146 to Ile-166, His-171 to Ala-191, Ile-231 to Ser-251, Glu-253 to Ile-273, and Leu-294 to Ile-314.

Belongs to the complex I subunit 1 family. As to quaternary structure, core subunit of respiratory chain NADH dehydrogenase (Complex I) which is composed of 45 different subunits.

The protein localises to the mitochondrion inner membrane. The catalysed reaction is a ubiquinone + NADH + 5 H(+)(in) = a ubiquinol + NAD(+) + 4 H(+)(out). In terms of biological role, core subunit of the mitochondrial membrane respiratory chain NADH dehydrogenase (Complex I) which catalyzes electron transfer from NADH through the respiratory chain, using ubiquinone as an electron acceptor. Essential for the catalytic activity and assembly of complex I. The polypeptide is NADH-ubiquinone oxidoreductase chain 1 (MT-ND1) (Homo sapiens (Human)).